The chain runs to 288 residues: Glutamate racemase (288 aa).

Substrate-binding positions include D10–S11 and Y42–G43. C73 (proton donor/acceptor) is an active-site residue. N74–T75 provides a ligand contact to substrate. C184 serves as the catalytic Proton donor/acceptor. Position 185–186 (T185–H186) interacts with substrate.

The protein belongs to the aspartate/glutamate racemases family.

It catalyses the reaction L-glutamate = D-glutamate. Its pathway is cell wall biogenesis; peptidoglycan biosynthesis. Provides the (R)-glutamate required for cell wall biosynthesis. In Corynebacterium kroppenstedtii (strain DSM 44385 / JCM 11950 / CIP 105744 / CCUG 35717), this protein is Glutamate racemase.